The primary structure comprises 83 residues: Small ribosomal subunit protein uS17 (83 aa).

The protein belongs to the universal ribosomal protein uS17 family. In terms of assembly, part of the 30S ribosomal subunit.

Its function is as follows. One of the primary rRNA binding proteins, it binds specifically to the 5'-end of 16S ribosomal RNA. This chain is Small ribosomal subunit protein uS17, found in Francisella philomiragia subsp. philomiragia (strain ATCC 25017 / CCUG 19701 / FSC 153 / O#319-036).